Here is a 473-residue protein sequence, read N- to C-terminus: Photosystem II CP43 reaction center protein (473 aa).

The propeptide occupies 1-14; the sequence is MKTLYSLRRFYPVE. Thr-15 is subject to N-acetylthreonine. Phosphothreonine is present on Thr-15. 5 consecutive transmembrane segments (helical) span residues 69–93, 134–155, 178–200, 255–275, and 291–312; these read LFEVAHFVPEKPMYEQGLILLPHLA, LLGPETLEESFPFFGYVWKDRN, KALYFGGVYDTWAPGGGDVRRIT, KPFAWARRAFVWSGEAYLSYS, and WFNNTAYPSEFYGPTGPEASQA. Residue Glu-367 participates in [CaMn4O5] cluster binding. Residues 447 to 471 form a helical membrane-spanning segment; sequence RARAAAAGFEKGIDRDFEPVLFMTP.

Belongs to the PsbB/PsbC family. PsbC subfamily. In terms of assembly, PSII is composed of 1 copy each of membrane proteins PsbA, PsbB, PsbC, PsbD, PsbE, PsbF, PsbH, PsbI, PsbJ, PsbK, PsbL, PsbM, PsbT, PsbX, PsbY, PsbZ, Psb30/Ycf12, at least 3 peripheral proteins of the oxygen-evolving complex and a large number of cofactors. It forms dimeric complexes. Requires Binds multiple chlorophylls and provides some of the ligands for the Ca-4Mn-5O cluster of the oxygen-evolving complex. It may also provide a ligand for a Cl- that is required for oxygen evolution. PSII binds additional chlorophylls, carotenoids and specific lipids. as cofactor.

The protein localises to the plastid. Its subcellular location is the chloroplast thylakoid membrane. In terms of biological role, one of the components of the core complex of photosystem II (PSII). It binds chlorophyll and helps catalyze the primary light-induced photochemical processes of PSII. PSII is a light-driven water:plastoquinone oxidoreductase, using light energy to abstract electrons from H(2)O, generating O(2) and a proton gradient subsequently used for ATP formation. The protein is Photosystem II CP43 reaction center protein of Nuphar advena (Common spatterdock).